Here is a 43-residue protein sequence, read N- to C-terminus: Potassium channel toxin gamma-KTx 4.12 (43 aa).

Cystine bridges form between Cys-5/Cys-23, Cys-11/Cys-34, Cys-20/Cys-39, and Cys-24/Cys-41.

In terms of tissue distribution, expressed by the venom gland.

The protein resides in the secreted. Functionally, reversibly blocks Kv11/ERG potassium channels. Is less toxic than ergtoxin (AC Q86QT3). This Centruroides sculpturatus (Arizona bark scorpion) protein is Potassium channel toxin gamma-KTx 4.12.